The following is a 120-amino-acid chain: Small ribosomal subunit protein uS13m (120 aa).

It belongs to the universal ribosomal protein uS13 family. As to quaternary structure, part of the small ribosomal subunit.

The protein resides in the mitochondrion. Its function is as follows. Located at the top of the head of the small subunit, it contacts several helices of the 18S rRNA. This Marchantia polymorpha (Common liverwort) protein is Small ribosomal subunit protein uS13m (RPS13).